A 187-amino-acid polypeptide reads, in one-letter code: Peptide deformylase (187 aa).

2 residues coordinate Fe cation: Cys-107 and His-149. Glu-150 is a catalytic residue. A Fe cation-binding site is contributed by His-153.

Belongs to the polypeptide deformylase family. Fe(2+) is required as a cofactor.

It carries out the reaction N-terminal N-formyl-L-methionyl-[peptide] + H2O = N-terminal L-methionyl-[peptide] + formate. Functionally, removes the formyl group from the N-terminal Met of newly synthesized proteins. Requires at least a dipeptide for an efficient rate of reaction. N-terminal L-methionine is a prerequisite for activity but the enzyme has broad specificity at other positions. This Synechocystis sp. (strain ATCC 27184 / PCC 6803 / Kazusa) protein is Peptide deformylase.